Here is a 397-residue protein sequence, read N- to C-terminus: Probable peptidoglycan glycosyltransferase FtsW (397 aa).

Residues 1-30 lie on the Cytoplasmic side of the membrane; the sequence is MYGLEMLEKIKLEYDKWACLTPKNSLYDRT. A helical membrane pass occupies residues 31 to 51; that stretch reads LVWLFLSLLMIGFIMVTSASI. The Periplasmic segment spans residues 52-61; sequence PVSTRLNNDP. Residues 62–82 traverse the membrane as a helical segment; the sequence is FHFAIRDSIYLACSLLAFAFV. Topologically, residues 83-94 are cytoplasmic; sequence VKIPMRNWEKYN. A helical transmembrane segment spans residues 95 to 115; that stretch reads VPLFLLSLLFLASVLIFGRSV. At 116–126 the chain is on the periplasmic side; it reads NGSIRWIQLGP. The helical transmembrane segment at 127 to 146 threads the bilayer; that stretch reads INFQPAELSKLAIICYFSSF. The Cytoplasmic portion of the chain corresponds to 147–158; sequence YVRKYDEMRNRS. The next 2 membrane-spanning stretches (helical) occupy residues 159–179 and 180–200; these read ASVIRPMVILFLFSSLLLLQP and DLGSVVVLFVLTFTMLFIMGA. Lysine 201 is a topological domain (cytoplasmic). Residues 202-222 form a helical membrane-spanning segment; the sequence is VMQFLLLIVTASVSFILLVLT. The Periplasmic portion of the chain corresponds to 223-280; the sequence is SEYRLKRVTSFLDPFADAYGDGFQLSNAQMAFGQGQLWGQGLGNSVQKLEYLPEAHTD. The helical transmembrane segment at 281-301 threads the bilayer; it reads FVMAVVAEEFGFIGIIFMVVL. Topologically, residues 302-325 are cytoplasmic; the sequence is LLCLSFRAIKISRDALKLEARFRG. A helical transmembrane segment spans residues 326–346; it reads FFAFGVAIWVFLQGSVNLGVA. Residues 347–356 are Periplasmic-facing; the sequence is SGALPTKGLT. Residues 357–377 traverse the membrane as a helical segment; the sequence is FPLVSYGGSSLVIMSVAIAIL. At 378 to 397 the chain is on the cytoplasmic side; sequence LRIDYENRLTRVGHAQIKEP.

Belongs to the SEDS family. FtsW subfamily.

It localises to the cell inner membrane. The catalysed reaction is [GlcNAc-(1-&gt;4)-Mur2Ac(oyl-L-Ala-gamma-D-Glu-L-Lys-D-Ala-D-Ala)](n)-di-trans,octa-cis-undecaprenyl diphosphate + beta-D-GlcNAc-(1-&gt;4)-Mur2Ac(oyl-L-Ala-gamma-D-Glu-L-Lys-D-Ala-D-Ala)-di-trans,octa-cis-undecaprenyl diphosphate = [GlcNAc-(1-&gt;4)-Mur2Ac(oyl-L-Ala-gamma-D-Glu-L-Lys-D-Ala-D-Ala)](n+1)-di-trans,octa-cis-undecaprenyl diphosphate + di-trans,octa-cis-undecaprenyl diphosphate + H(+). It participates in cell wall biogenesis; peptidoglycan biosynthesis. Functionally, peptidoglycan polymerase that is essential for cell division. This is Probable peptidoglycan glycosyltransferase FtsW from Haemophilus ducreyi (strain 35000HP / ATCC 700724).